We begin with the raw amino-acid sequence, 740 residues long: Catalase-peroxidase (740 aa).

Positions 107–229 (WHAAGTYRIH…LAAVQMGLIY (123 aa)) form a cross-link, tryptophyl-tyrosyl-methioninium (Trp-Tyr) (with M-255). His108 serves as the catalytic Proton acceptor. The tryptophyl-tyrosyl-methioninium (Tyr-Met) (with W-107) cross-link spans 229–255 (YVNPEGPNGNPDPMAAAVDIRETFRRM). Heme b is bound at residue His270.

It belongs to the peroxidase family. Peroxidase/catalase subfamily. As to quaternary structure, homodimer. Requires heme b as cofactor. In terms of processing, formation of the three residue Trp-Tyr-Met cross-link is important for the catalase, but not the peroxidase activity of the enzyme.

The catalysed reaction is H2O2 + AH2 = A + 2 H2O. The enzyme catalyses 2 H2O2 = O2 + 2 H2O. In terms of biological role, bifunctional enzyme with both catalase and broad-spectrum peroxidase activity. May play a role in the intracellular survival of mycobacteria. The chain is Catalase-peroxidase from Mycobacterium bovis (strain ATCC BAA-935 / AF2122/97).